Here is a 515-residue protein sequence, read N- to C-terminus: 2-isopropylmalate synthase (515 aa).

Residues 5 to 267 enclose the Pyruvate carboxyltransferase domain; the sequence is VIIFDTTLRD…HTNLKHDEIH (263 aa). Residues Asp14, His202, His204, and Asn238 each coordinate Mn(2+). The interval 392–515 is regulatory domain; it reads KLNYLSVQSG…EIKQKKVETV (124 aa).

Belongs to the alpha-IPM synthase/homocitrate synthase family. LeuA type 1 subfamily. As to quaternary structure, homodimer. Mn(2+) serves as cofactor.

It localises to the cytoplasm. The catalysed reaction is 3-methyl-2-oxobutanoate + acetyl-CoA + H2O = (2S)-2-isopropylmalate + CoA + H(+). The protein operates within amino-acid biosynthesis; L-leucine biosynthesis; L-leucine from 3-methyl-2-oxobutanoate: step 1/4. Functionally, catalyzes the condensation of the acetyl group of acetyl-CoA with 3-methyl-2-oxobutanoate (2-ketoisovalerate) to form 3-carboxy-3-hydroxy-4-methylpentanoate (2-isopropylmalate). The protein is 2-isopropylmalate synthase of Aliivibrio fischeri (strain MJ11) (Vibrio fischeri).